The sequence spans 608 residues: DNA ligase (608 aa).

Residue Glu266 coordinates ATP. Lys268 functions as the N6-AMP-lysine intermediate in the catalytic mechanism. Arg273, Arg288, Glu318, Phe358, Arg435, and Lys441 together coordinate ATP.

It belongs to the ATP-dependent DNA ligase family. Mg(2+) serves as cofactor. The cofactor is Mn(2+).

The catalysed reaction is ATP + (deoxyribonucleotide)n-3'-hydroxyl + 5'-phospho-(deoxyribonucleotide)m = (deoxyribonucleotide)n+m + AMP + diphosphate.. The enzyme catalyses ADP + (deoxyribonucleotide)n-3'-hydroxyl + 5'-phospho-(deoxyribonucleotide)m = (deoxyribonucleotide)n+m + AMP + phosphate.. It catalyses the reaction GTP + (deoxyribonucleotide)n-3'-hydroxyl + 5'-phospho-(deoxyribonucleotide)m = (deoxyribonucleotide)n+m + GMP + diphosphate.. Functionally, DNA ligase that seals nicks in double-stranded DNA during DNA replication, DNA recombination and DNA repair. Can use ATP, ADP and GTP, but not CTP, TTP or NAD(+). The protein is DNA ligase of Hyperthermus butylicus (strain DSM 5456 / JCM 9403 / PLM1-5).